The following is a 357-amino-acid chain: Probable RNA methyltransferase Daro_1157 (357 aa).

E91 functions as the Proton acceptor in the catalytic mechanism. The region spanning 94 to 320 (LLPRDGLCIS…TTVRNSAGQD (227 aa)) is the Radical SAM core domain. C101 and C325 are disulfide-bonded. Positions 108, 112, and 115 each coordinate [4Fe-4S] cluster. Residues 153–154 (GE), S183, 206–208 (SLH), and N282 each bind S-adenosyl-L-methionine. The active-site S-methylcysteine intermediate is the C325.

Belongs to the radical SAM superfamily. RlmN family. [4Fe-4S] cluster is required as a cofactor.

Its subcellular location is the cytoplasm. This chain is Probable RNA methyltransferase Daro_1157, found in Dechloromonas aromatica (strain RCB).